Consider the following 795-residue polypeptide: Probable alpha,alpha-trehalose-phosphate synthase [UDP-forming] 4 (795 aa).

The interval 4–469 (PRLLVVSMSL…WADDFMKLTL (466 aa)) is glycosyltransferase.

In the N-terminal section; belongs to the glycosyltransferase 20 family. The protein in the C-terminal section; belongs to the trehalose phosphatase family.

It carries out the reaction D-glucose 6-phosphate + UDP-alpha-D-glucose = alpha,alpha-trehalose 6-phosphate + UDP + H(+). The sequence is that of Probable alpha,alpha-trehalose-phosphate synthase [UDP-forming] 4 (TPS4) from Arabidopsis thaliana (Mouse-ear cress).